Consider the following 256-residue polypeptide: Type III pantothenate kinase (256 aa).

6–13 (DVGNTNMV) is a binding site for ATP. Residues Y100 and 107–110 (GADR) each bind substrate. D109 serves as the catalytic Proton acceptor. D129 contacts K(+). T132 is a binding site for ATP. Residue T184 participates in substrate binding.

The protein belongs to the type III pantothenate kinase family. Homodimer. It depends on NH4(+) as a cofactor. K(+) serves as cofactor.

Its subcellular location is the cytoplasm. It carries out the reaction (R)-pantothenate + ATP = (R)-4'-phosphopantothenate + ADP + H(+). It participates in cofactor biosynthesis; coenzyme A biosynthesis; CoA from (R)-pantothenate: step 1/5. In terms of biological role, catalyzes the phosphorylation of pantothenate (Pan), the first step in CoA biosynthesis. The protein is Type III pantothenate kinase of Clostridioides difficile (strain 630) (Peptoclostridium difficile).